The following is a 496-amino-acid chain: Lysine--tRNA ligase (496 aa).

E403 and E410 together coordinate Mg(2+).

The protein belongs to the class-II aminoacyl-tRNA synthetase family. In terms of assembly, homodimer. The cofactor is Mg(2+).

Its subcellular location is the cytoplasm. It catalyses the reaction tRNA(Lys) + L-lysine + ATP = L-lysyl-tRNA(Lys) + AMP + diphosphate. The chain is Lysine--tRNA ligase from Aster yellows witches'-broom phytoplasma (strain AYWB).